A 356-amino-acid chain; its full sequence is Chavicol O-methyltransferase (356 aa).

S-adenosyl-L-methionine contacts are provided by Gly202, Asp225, Asp245, Met246, and Lys259. The active-site Proton acceptor is His263.

The protein belongs to the class I-like SAM-binding methyltransferase superfamily. Cation-independent O-methyltransferase family. COMT subfamily. Homodimer. In terms of tissue distribution, specifically expressed in the peltate glandular trichomes on the surface of the young basil leaves.

It catalyses the reaction (E)-isoeugenol + S-adenosyl-L-methionine = (E)-isomethyleugenol + S-adenosyl-L-homocysteine + H(+). The protein operates within aromatic compound metabolism; phenylpropanoid biosynthesis. In terms of biological role, phenylpropene O-methyltransferase that catalyzes the methylation of the para-4-hydroxyl of chavicol to methylchavicol. Can also convert eugenol to methyleugenol but with less affinity. This Ocimum basilicum (Sweet basil) protein is Chavicol O-methyltransferase (CVOMT1).